The primary structure comprises 854 residues: DNA mismatch repair protein MutS (854 aa).

615–622 is an ATP binding site; the sequence is GPNMGGKS.

Belongs to the DNA mismatch repair MutS family.

This protein is involved in the repair of mismatches in DNA. It is possible that it carries out the mismatch recognition step. This protein has a weak ATPase activity. In Proteus mirabilis (strain HI4320), this protein is DNA mismatch repair protein MutS.